Reading from the N-terminus, the 391-residue chain is Shewanella-like protein phosphatase 2 (391 aa).

4 residues coordinate Mn(2+): D61, H63, D97, and N132. H133 acts as the Proton donor in catalysis. Residues H232 and H295 each coordinate Mn(2+).

This sequence belongs to the metallophosphoesterase superfamily. SLP family. Requires Mn(2+) as cofactor. Expressed in roots and siliques (at protein level).

Its subcellular location is the cytoplasm. It localises to the cytosol. Functionally, shows phosphatase activity, hydrolyzing the artificial substrate para-nitrophenylphosphate (pNPP) in vitro. This Arabidopsis thaliana (Mouse-ear cress) protein is Shewanella-like protein phosphatase 2.